We begin with the raw amino-acid sequence, 147 residues long: Protein disulfide isomerase-like 5-1 (147 aa).

Residues 1–29 (MDLAPGRRARLLVALALVVLVALAARSGA) form the signal peptide. Residues 30–137 (EVITLTEETF…LKNFVSDEAE (108 aa)) enclose the Thioredoxin domain. Catalysis depends on nucleophile residues Cys-59 and Cys-62. Cys-59 and Cys-62 form a disulfide bridge.

The protein belongs to the protein disulfide isomerase family.

In terms of biological role, acts as a protein-folding catalyst that interacts with nascent polypeptides to catalyze the formation, isomerization, and reduction or oxidation of disulfide bonds. May play a role in storage protein biogenesis. This chain is Protein disulfide isomerase-like 5-1 (PDIL5-1), found in Oryza sativa subsp. japonica (Rice).